Here is a 272-residue protein sequence, read N- to C-terminus: MGSATVLDSILEGVRADVAAREAVVSLAEVKARAERAPAPLDVMAALRAPGIAVIAEVKRASPSRGELASIADPAELASAYESGGARAISVLTEQRRFNGSLDDLDAVRAAVSIPVLRKDFIVRPYQIHEARAHGADLLLLIVAALEQPALESLLERTESLGMTALVEVHTEEEADRALQAGASLIGVNARNLKTLEVDRDCFARIAPGLPTNVIKIAESGVRGTADLLAYAGAGADGVLVGEGLVTSGDPRSAVADLVTAGTHPSCPKPAR.

The protein belongs to the TrpC family.

The enzyme catalyses 1-(2-carboxyphenylamino)-1-deoxy-D-ribulose 5-phosphate + H(+) = (1S,2R)-1-C-(indol-3-yl)glycerol 3-phosphate + CO2 + H2O. Its pathway is amino-acid biosynthesis; L-tryptophan biosynthesis; L-tryptophan from chorismate: step 4/5. The chain is Indole-3-glycerol phosphate synthase from Mycolicibacterium gilvum (strain PYR-GCK) (Mycobacterium gilvum (strain PYR-GCK)).